The following is a 175-amino-acid chain: Peptide methionine sulfoxide reductase MsrA (175 aa).

Residue C12 is part of the active site.

This sequence belongs to the MsrA Met sulfoxide reductase family.

It catalyses the reaction L-methionyl-[protein] + [thioredoxin]-disulfide + H2O = L-methionyl-(S)-S-oxide-[protein] + [thioredoxin]-dithiol. The enzyme catalyses [thioredoxin]-disulfide + L-methionine + H2O = L-methionine (S)-S-oxide + [thioredoxin]-dithiol. Its function is as follows. Has an important function as a repair enzyme for proteins that have been inactivated by oxidation. Catalyzes the reversible oxidation-reduction of methionine sulfoxide in proteins to methionine. The polypeptide is Peptide methionine sulfoxide reductase MsrA (Limosilactobacillus reuteri (strain DSM 20016) (Lactobacillus reuteri)).